The sequence spans 199 residues: Charged multivesicular body protein 1B2 (199 aa).

Positions 15 to 47 (AKELNRNAKKCDKEEKAEKAKIKKAIQKGNTEV) form a coiled coil. The segment at 132-156 (MEDTMSSTTTLTTPQNQVDMLLQEM) is interaction with IST1. The interval 167–199 (ELPQGQTGSVGASVASTEQDELSQRLARLRDQV) is disordered. Residues 170-183 (QGQTGSVGASVAST) show a composition bias toward polar residues. The interaction with SPAST stretch occupies residues 174 to 199 (GSVGASVASTEQDELSQRLARLRDQV). Residues 177–199 (GASVASTEQDELSQRLARLRDQV) are a coiled coil. Residues 180–196 (VASTEQDELSQRLARLR) are interaction with VPS4A, MITD1 and STAMBP. Residues 180–199 (VASTEQDELSQRLARLRDQV) are interaction with VTA1. Residues 183–199 (TEQDELSQRLARLRDQV) form an interaction with VPS4B region. Positions 186 to 196 (DELSQRLARLR) match the MIT-interacting motif motif.

This sequence belongs to the SNF7 family. In terms of assembly, probable peripherally associated component of the endosomal sorting required for transport complex III (ESCRT-III). ESCRT-III components are thought to multimerize to form a flat lattice on the perimeter membrane of the endosome. Several assembly forms of ESCRT-III may exist that interact and act sequentially. Interacts with CHMP1A. Interacts with VTA1; the interaction probably involves the open conformation of CHMP1B. Interacts with CHMP2A. Interacts with VPS4A; the interaction is direct. Interacts with VPS4B; the interaction is direct. Interacts with SPAST (via MIT domain); the interaction is direct. Interacts with IST1. Interacts with MITD1. Interacts with STAMBP.

It is found in the cytoplasm. The protein resides in the cytosol. The protein localises to the endosome. Its subcellular location is the late endosome membrane. Its function is as follows. Probable peripherally associated component of the endosomal sorting required for transport complex III (ESCRT-III) which is involved in multivesicular bodies (MVBs) formation and sorting of endosomal cargo proteins into MVBs. MVBs contain intraluminal vesicles (ILVs) that are generated by invagination and scission from the limiting membrane of the endosome and mostly are delivered to lysosomes enabling degradation of membrane proteins, such as stimulated growth factor receptors, lysosomal enzymes and lipids. The MVB pathway appears to require the sequential function of ESCRT-O, -I,-II and -III complexes. ESCRT-III proteins mostly dissociate from the invaginating membrane before the ILV is released. The ESCRT machinery also functions in topologically equivalent membrane fission events, such as the terminal stages of cytokinesis. ESCRT-III proteins are believed to mediate the necessary vesicle extrusion and/or membrane fission activities, possibly in conjunction with the AAA ATPase VPS4. Involved in cytokinesis. Involved in recruiting VPS4A and/or VPS4B and SPAST to the midbody of dividing cells. The chain is Charged multivesicular body protein 1B2 from Mus musculus (Mouse).